Here is a 242-residue protein sequence, read N- to C-terminus: Putative S-adenosyl-L-methionine-dependent methyltransferase Mmcs_0580 (242 aa).

Residues Asp104 and 134-135 (DL) contribute to the S-adenosyl-L-methionine site.

This sequence belongs to the UPF0677 family.

Its function is as follows. Exhibits S-adenosyl-L-methionine-dependent methyltransferase activity. The chain is Putative S-adenosyl-L-methionine-dependent methyltransferase Mmcs_0580 from Mycobacterium sp. (strain MCS).